Consider the following 78-residue polypeptide: Omega-conotoxin-like 12 (78 aa).

Residues 1–22 (MKLTCVVIVAVLLLTACQLITA) form the signal peptide. A propeptide spanning residues 23–42 (DDSRGTQKHRSLRSTTKVSK) is cleaved from the precursor. Intrachain disulfides connect C46-C62, C53-C65, and C61-C72.

The protein belongs to the conotoxin O1 superfamily. In terms of tissue distribution, expressed by the venom duct.

It is found in the secreted. In terms of biological role, omega-conotoxins act at presynaptic membranes, they bind and block voltage-gated calcium channels (Cav). The chain is Omega-conotoxin-like 12 from Conus striatus (Striated cone).